We begin with the raw amino-acid sequence, 122 residues long: Large ribosomal subunit protein uL14 (122 aa).

Belongs to the universal ribosomal protein uL14 family. Part of the 50S ribosomal subunit. Forms a cluster with proteins L3 and L19. In the 70S ribosome, L14 and L19 interact and together make contacts with the 16S rRNA in bridges B5 and B8.

In terms of biological role, binds to 23S rRNA. Forms part of two intersubunit bridges in the 70S ribosome. The chain is Large ribosomal subunit protein uL14 from Chromobacterium violaceum (strain ATCC 12472 / DSM 30191 / JCM 1249 / CCUG 213 / NBRC 12614 / NCIMB 9131 / NCTC 9757 / MK).